We begin with the raw amino-acid sequence, 404 residues long: Zinc metalloprotease Rip1 (404 aa).

A helical transmembrane segment spans residues 1 to 21 (MMFVTGIVLFALAILISVALH). H21 contributes to the Zn(2+) binding site. E22 is an active-site residue. H25 contacts Zn(2+). Residues 104-124 (PGMNLAICLVLIYAIALVWGL) form a helical membrane-spanning segment. The region spanning 121 to 203 (VWGLPNLHPP…SVPIVVERDG (83 aa)) is the PDZ domain. D202 contacts Zn(2+). Helical transmembrane passes span 313-333 (LWVA…TINL) and 373-393 (LLPA…LTVT).

The protein belongs to the peptidase M50B family. The cofactor is Zn(2+).

Its subcellular location is the cell membrane. A probable intramembrane site-2 protease (S2P) that cleaves type-2 transmembrane proteins within their membrane-spanning domains. Cleaves PbpB (PBP3, FtsI); cleavage is inhibited by Wag31-PbpB interaction. Probably also cleaves anti-sigma factors RskA, RslA and RsmA. Its function is as follows. Regulated intramembrane proteolysis (RIP) occurs when an extracytoplasmic signal (possibly oxidative stress) triggers a concerted proteolytic cascade to transmit information and elicit cellular responses. The membrane-spanning regulatory substrate protein (includes anti-sigma factors RskA, RslA, RsmA, and PbpB in M.tuberculosis) is first cut extracytoplasmically (site-1 protease, S1P), then within the membrane itself (site-2 protease, S2P, this entry), while cytoplasmic proteases finish degrading the regulatory protein, liberating the effector protein (ECF sigma factors SigK, SigL and SigM). This Mycobacterium bovis (strain BCG / Pasteur 1173P2) protein is Zinc metalloprotease Rip1 (rip1).